Consider the following 126-residue polypeptide: Hydrogenase maturation factor HypA (126 aa).

Residue H2 coordinates Ni(2+). Residues C78, C81, C97, and C100 each contribute to the Zn(2+) site.

The protein belongs to the HypA/HybF family.

Its function is as follows. Involved in the maturation of [NiFe] hydrogenases. Required for nickel insertion into the metal center of the hydrogenase. This chain is Hydrogenase maturation factor HypA, found in Methanococcus maripaludis (strain C6 / ATCC BAA-1332).